We begin with the raw amino-acid sequence, 315 residues long: Methionyl-tRNA formyltransferase (315 aa).

113 to 116 (SLLP) contributes to the (6S)-5,6,7,8-tetrahydrofolate binding site.

Belongs to the Fmt family.

The catalysed reaction is L-methionyl-tRNA(fMet) + (6R)-10-formyltetrahydrofolate = N-formyl-L-methionyl-tRNA(fMet) + (6S)-5,6,7,8-tetrahydrofolate + H(+). Its function is as follows. Attaches a formyl group to the free amino group of methionyl-tRNA(fMet). The formyl group appears to play a dual role in the initiator identity of N-formylmethionyl-tRNA by promoting its recognition by IF2 and preventing the misappropriation of this tRNA by the elongation apparatus. The polypeptide is Methionyl-tRNA formyltransferase (Escherichia coli (strain SE11)).